Consider the following 134-residue polypeptide: Fluoride-specific ion channel FluC 2 (134 aa).

Transmembrane regions (helical) follow at residues 1 to 21 (MNYF…EITG), 28 to 48 (IFPV…LFFM), 68 to 88 (GFLG…LLLF), and 92 to 112 (LLIG…SGIL). 2 residues coordinate Na(+): G71 and T74.

This sequence belongs to the fluoride channel Fluc/FEX (TC 1.A.43) family.

It localises to the cell membrane. The catalysed reaction is fluoride(in) = fluoride(out). Its activity is regulated as follows. Na(+) is not transported, but it plays an essential structural role and its presence is essential for fluoride channel function. Fluoride-specific ion channel. Important for reducing fluoride concentration in the cell, thus reducing its toxicity. This Carboxydothermus hydrogenoformans (strain ATCC BAA-161 / DSM 6008 / Z-2901) protein is Fluoride-specific ion channel FluC 2.